A 116-amino-acid polypeptide reads, in one-letter code: Large ribosomal subunit protein uL22 (116 aa).

The protein belongs to the universal ribosomal protein uL22 family. As to quaternary structure, part of the 50S ribosomal subunit.

This protein binds specifically to 23S rRNA; its binding is stimulated by other ribosomal proteins, e.g. L4, L17, and L20. It is important during the early stages of 50S assembly. It makes multiple contacts with different domains of the 23S rRNA in the assembled 50S subunit and ribosome. In terms of biological role, the globular domain of the protein is located near the polypeptide exit tunnel on the outside of the subunit, while an extended beta-hairpin is found that lines the wall of the exit tunnel in the center of the 70S ribosome. This Orientia tsutsugamushi (strain Boryong) (Rickettsia tsutsugamushi) protein is Large ribosomal subunit protein uL22.